A 588-amino-acid chain; its full sequence is MFS siderochrome iron transporter 1 (588 aa).

13 consecutive transmembrane segments (helical) span residues 60–80, 104–124, 133–153, 161–181, 191–211, 225–245, 278–298, 307–327, 348–368, 385–405, 413–433, 440–460, and 473–495; these read QVWS…ITFV, LTAS…LPLA, PQGF…MAAC, AAQV…SIFI, ALMF…GGPL, YGAF…VFAW, IIGI…FSLY, SSLV…FALY, LGAC…DSYF, YIVN…GILV, WLAL…MITF, IGYI…CVIT, and YVAV…GQTV. Residue Asn-519 is glycosylated (N-linked (GlcNAc...) asparagine). Residues 552–572 form a helical membrane-spanning segment; that stretch reads KYMLIGGTAILAVGLGATMMW.

It belongs to the major facilitator superfamily.

It localises to the membrane. Major facilitator transporter involved in siderophore transport. The sequence is that of MFS siderochrome iron transporter 1 from Ajellomyces capsulatus (Darling's disease fungus).